The sequence spans 353 residues: E3 ubiquitin-protein ligase TRIM63 (353 aa).

The RING-type zinc-finger motif lies at 23–79 (CPICLEMFTKPVVILPCQHNLCRKCANDIFQAANPYWTSRGSSVSMSGGRFRCPTCR). The interaction with TTN stretch occupies residues 74–218 (RCPTCRHEVI…LSQKFDTLYA (145 aa)). The B box-type zinc-finger motif lies at 117–159 (GSHPMCKEHEDEKINIYCLTCEVPTCSMCKVFGIHKACEVAPL). Residues C122, H125, C145, and H151 each contribute to the Zn(2+) site. The stretch at 207 to 269 (EELSQKFDTL…VETAIQSLDE (63 aa)) forms a coiled coil. In terms of domain architecture, COS spans 267–325 (LDEPGGATFLLTAKQLIKSIVEASKGCQLGKTEQGFENMDFFTLDLEHIADALRAIDFG). Acidic residues predominate over residues 326–344 (TDEEEEEFIEEEDQEEEES). A disordered region spans residues 326 to 353 (TDEEEEEFIEEEDQEEEESTEGKEEGHQ).

As to quaternary structure, homodimer. Homooligomer and heterooligomer. Interacts with SUMO2, titin/TTN and GMEB1. Interacts with TRIM54 and probably with TRIM55 and TNNI3. Forms a ternary complex with RACK1 and PRKCE. Interacts with CKM. In terms of tissue distribution, muscle specific. Selectively expressed in heart and skeletal muscle. Also expressed in the iris.

Its subcellular location is the cytoplasm. The protein resides in the nucleus. The protein localises to the myofibril. It is found in the sarcomere. It localises to the m line. Its subcellular location is the z line. It catalyses the reaction S-ubiquitinyl-[E2 ubiquitin-conjugating enzyme]-L-cysteine + [acceptor protein]-L-lysine = [E2 ubiquitin-conjugating enzyme]-L-cysteine + N(6)-ubiquitinyl-[acceptor protein]-L-lysine.. Its pathway is protein modification; protein ubiquitination. E3 ubiquitin ligase. Mediates the ubiquitination and subsequent proteasomal degradation of CKM, GMEB1 and HIBADH. Regulates the proteasomal degradation of muscle proteins under amino acid starvation, where muscle protein is catabolized to provide other organs with amino acids. Inhibits de novo skeletal muscle protein synthesis under amino acid starvation. Regulates proteasomal degradation of cardiac troponin I/TNNI3 and probably of other sarcomeric-associated proteins. May play a role in striated muscle atrophy and hypertrophy by regulating an anti-hypertrophic PKC-mediated signaling pathway. May regulate the organization of myofibrils through TTN in muscle cells. This Homo sapiens (Human) protein is E3 ubiquitin-protein ligase TRIM63 (TRIM63).